A 421-amino-acid polypeptide reads, in one-letter code: 5-hydroxytryptamine receptor 1A (421 aa).

The Extracellular portion of the chain corresponds to 1 to 38 (MDMFSLGQGNNTTTSLEPFGTGGNDTGLSNVTFSYQVI). 4 N-linked (GlcNAc...) asparagine glycosylation sites follow: N10, N11, N24, and N30. A helical membrane pass occupies residues 39–59 (TSLLLGTLIFCAVLGNACVVA). The Cytoplasmic segment spans residues 60-73 (AIALERSLQNVANY). The chain crosses the membrane as a helical span at residues 74 to 98 (LIGSLAVTDLMVSVLVLPMAALYQV). The Extracellular portion of the chain corresponds to 99–107 (LNKWTLGQV). Residues 108–132 (TCDLFIALDVLCCTSSILHLCAIAL) form a helical membrane-spanning segment. A disulfide bridge links C109 with C187. Serotonin contacts are provided by D116 and C120. The DRY motif; important for ligand-induced conformation changes signature appears at 133–135 (DRY). Topologically, residues 133–152 (DRYWAITDPIDYVNKRTPRR) are cytoplasmic. A helical transmembrane segment spans residues 153-174 (AAALISLTWLIGFLISIPPMLG). Residues 175-193 (WRTPEDRSNPNECTISKDH) lie on the Extracellular side of the membrane. The chain crosses the membrane as a helical span at residues 194-216 (GYTIYSTFGAFYIPLLLMLVLYG). Residues 217 to 346 (RIFRAARFRI…LARERKTVKT (130 aa)) lie on the Cytoplasmic side of the membrane. The segment at 237 to 268 (GAGTSFGTSSAPPPKKSLNGQPGSGDCRRSAE) is disordered. T314, K345, T346, and G352 together coordinate 1D-myo-inositol 4-phosphate. Residues 347–370 (LGIIMGTFILCWLPFFIVALVLPF) form a helical membrane-spanning segment. The Extracellular segment spans residues 371-378 (CESSCHMP). A helical transmembrane segment spans residues 379 to 403 (ELLGAIINWLGYSNSLLNPVIYAYF). Positions 396–400 (NPVIY) match the NPxxY motif; important for ligand-induced conformation changes and signaling motif. 1D-myo-inositol 4-phosphate is bound by residues F403, N404, and K405. Topologically, residues 404–421 (NKDFQNAFKKIIKCKFCR) are cytoplasmic.

Belongs to the G-protein coupled receptor 1 family. 5-hydroxytryptamine receptor subfamily. HTR1A sub-subfamily. In terms of assembly, heterodimer; heterodimerizes with GPER1. Interacts with YIF1B. Interacts with GPR39 and GALR1. Most abundantly expressed in midbrain, in dorsal raphe and hippocampus. Detected at lower levels in amygdala and brain cortex.

It is found in the cell membrane. The protein resides in the cell projection. The protein localises to the dendrite. With respect to regulation, G-protein coupled receptor activity is regulated by lipids: phosphatidylinositol 4-phosphate increases HTR1A-mediated activity. Plays a role in the regulation of dopamine and 5-hydroxytryptamine levels in the brain, and thereby affects neural activity, mood and behavior. Plays a role in the response to anxiogenic stimuli. G-protein coupled receptor for 5-hydroxytryptamine (serotonin). Also functions as a receptor for various drugs and psychoactive substances. Ligand binding causes a conformation change that triggers signaling via guanine nucleotide-binding proteins (G proteins) and modulates the activity of downstream effectors, such as adenylate cyclase. HTR1A is coupled to G(i)/G(o) G alpha proteins and mediates inhibitory neurotransmission: signaling inhibits adenylate cyclase activity and activates a phosphatidylinositol-calcium second messenger system that regulates the release of Ca(2+) ions from intracellular stores. Beta-arrestin family members regulate signaling by mediating both receptor desensitization and resensitization processes. This is 5-hydroxytryptamine receptor 1A (Htr1a) from Mus musculus (Mouse).